Consider the following 428-residue polypeptide: Dihydroorotase (428 aa).

2 residues coordinate Zn(2+): His59 and His61. Residues 61–63 (HLR) and Asn93 each bind substrate. Zn(2+) contacts are provided by Asp151, His178, and His231. Asn277 lines the substrate pocket. Asp304 lines the Zn(2+) pocket. Asp304 is a catalytic residue. Substrate contacts are provided by residues His308 and 322–323 (FG).

This sequence belongs to the metallo-dependent hydrolases superfamily. DHOase family. Class I DHOase subfamily. The cofactor is Zn(2+).

The enzyme catalyses (S)-dihydroorotate + H2O = N-carbamoyl-L-aspartate + H(+). The protein operates within pyrimidine metabolism; UMP biosynthesis via de novo pathway; (S)-dihydroorotate from bicarbonate: step 3/3. In terms of biological role, catalyzes the reversible cyclization of carbamoyl aspartate to dihydroorotate. This chain is Dihydroorotase, found in Bacillus anthracis (strain A0248).